We begin with the raw amino-acid sequence, 1040 residues long: Neprilysin-4 (1040 aa).

A disordered region spans residues 1–27 (MSRHSQLKLAMPSVHGAPATAPGSPMN). A required for maintaining muscle integrity region spans residues 1–45 (MSRHSQLKLAMPSVHGAPATAPGSPMNAKARSVKLGLGVNQRTGR). Residues 1 to 55 (MSRHSQLKLAMPSVHGAPATAPGSPMNAKARSVKLGLGVNQRTGRVQWCPGLTCC) lie on the Cytoplasmic side of the membrane. The helical; Signal-anchor for type II membrane protein transmembrane segment at 56–76 (KMLLLLPVVMLPLTLVLILIM) threads the bilayer. Residues 77–1040 (RLDGMLAALQ…MNPQKKCSVW (964 aa)) are Extracellular-facing. Residues 251-1040 (EEGTREGIRM…MNPQKKCSVW (790 aa)) enclose the Peptidase M13 domain. 4 disulfides stabilise this stretch: cysteine 277–cysteine 1025, cysteine 285–cysteine 985, cysteine 452–cysteine 700, and cysteine 909–cysteine 1037. Residues asparagine 387, asparagine 593, asparagine 723, and asparagine 819 are each glycosylated (N-linked (GlcNAc...) asparagine). Zn(2+) is bound at residue histidine 872. Glutamate 873 is an active-site residue. Histidine 876 contributes to the Zn(2+) binding site. N-linked (GlcNAc...) asparagine glycosylation is present at asparagine 916. Glutamate 934 lines the Zn(2+) pocket. Aspartate 938 serves as the catalytic Proton donor. The N-linked (GlcNAc...) asparagine glycan is linked to asparagine 969.

Belongs to the peptidase M13 family. In terms of assembly, interacts (via intracellular domain) with the putative carbohydrate kinase CG3534. The cofactor is Zn(2+). In terms of tissue distribution, expressed in the gonads and testes of adults, and the adult and larval brain (at protein level). In embryos, expressed in the pericardial, muscle founder and glia cells (at protein level). In stage 12 embryos, expressed in specific dorsal muscle founder cells such as DA1 and DO2, and also in the certain pericardial progenitor cells where expression persists throughout embryogenesis. Expressed in the glia cells of the embryonic, larval and adult central nervous system. Expressed in the somatic muscles of larvae, pupae and adults. Isoform A: Detected in the male abdomen (at protein level). Isoform B: Not detected in the male or female abdomen (at protein level).

It localises to the cell membrane. The protein resides in the sarcoplasmic reticulum. Its subcellular location is the cytoplasm. The catalysed reaction is Preferential cleavage of polypeptides between hydrophobic residues, particularly with Phe or Tyr at P1'.. Its function is as follows. Metalloendoprotease which cleaves peptides at the amino side of hydrophobic residues - such as the hormones Akh and Dh31, and the neuropeptides Allatostatins (AST1, AST2, AST3 and AST4), Crz, Drosulfakinins (DSK-I and DSK-II), Lk, sNPF and the tachykinin peptides TK-1, TK-2, TK-4 and TK-5. Functions in female fertility, memory formation and may also act in regulating insulin signaling and food intake. Likely to be involved in controlling feeding behavior and the expression of insulin-like peptides by cleaving various regulatory peptides that include certain Drosulfakinins, Allatostatins and tachykinin peptides. Required in females for normal patterns of egg laying and hatching. Required in the dorsal paired medial neurons for the proper formation of long-term (LTM) and middle-term memories (MTM). Also required in the mushroom body neurons where it functions redundantly with neprilysins Nep2 and Nep3, in normal LTM formation. Functionally, cleaves angiotensin-1 and tachykinin neuropeptide substance P. Functions in maintaining muscle integrity, possibly independently of its endopeptidase activity. This is Neprilysin-4 from Drosophila melanogaster (Fruit fly).